Reading from the N-terminus, the 112-residue chain is Urease subunit beta (112 aa).

Belongs to the urease beta subunit family. In terms of assembly, heterotrimer of UreA (gamma), UreB (beta) and UreC (alpha) subunits. Three heterotrimers associate to form the active enzyme.

The protein resides in the cytoplasm. The catalysed reaction is urea + 2 H2O + H(+) = hydrogencarbonate + 2 NH4(+). It participates in nitrogen metabolism; urea degradation; CO(2) and NH(3) from urea (urease route): step 1/1. The polypeptide is Urease subunit beta (Thioalkalivibrio sulfidiphilus (strain HL-EbGR7)).